The chain runs to 358 residues: Phenylalanine--tRNA ligase alpha subunit (358 aa).

Mg(2+) is bound at residue Glu279.

It belongs to the class-II aminoacyl-tRNA synthetase family. Phe-tRNA synthetase alpha subunit type 1 subfamily. In terms of assembly, tetramer of two alpha and two beta subunits. Mg(2+) serves as cofactor.

It is found in the cytoplasm. The catalysed reaction is tRNA(Phe) + L-phenylalanine + ATP = L-phenylalanyl-tRNA(Phe) + AMP + diphosphate + H(+). In Variovorax paradoxus (strain S110), this protein is Phenylalanine--tRNA ligase alpha subunit.